The following is a 275-amino-acid chain: Type III pantothenate kinase (275 aa).

6–13 (DAGNTNIV) is an ATP binding site. 108–111 (GADR) contributes to the substrate binding site. The active-site Proton acceptor is the aspartate 110. Aspartate 130 lines the K(+) pocket. ATP is bound at residue threonine 133. Threonine 187 provides a ligand contact to substrate.

Belongs to the type III pantothenate kinase family. Homodimer. NH4(+) serves as cofactor. It depends on K(+) as a cofactor.

The protein localises to the cytoplasm. It carries out the reaction (R)-pantothenate + ATP = (R)-4'-phosphopantothenate + ADP + H(+). It functions in the pathway cofactor biosynthesis; coenzyme A biosynthesis; CoA from (R)-pantothenate: step 1/5. Its function is as follows. Catalyzes the phosphorylation of pantothenate (Pan), the first step in CoA biosynthesis. In Zymomonas mobilis subsp. mobilis (strain ATCC 31821 / ZM4 / CP4), this protein is Type III pantothenate kinase.